Here is a 411-residue protein sequence, read N- to C-terminus: Histidine--tRNA ligase (411 aa).

Belongs to the class-II aminoacyl-tRNA synthetase family. As to quaternary structure, homodimer.

It is found in the cytoplasm. The enzyme catalyses tRNA(His) + L-histidine + ATP = L-histidyl-tRNA(His) + AMP + diphosphate + H(+). In Dictyoglomus turgidum (strain DSM 6724 / Z-1310), this protein is Histidine--tRNA ligase.